Consider the following 126-residue polypeptide: Small ribosomal subunit protein uS12 (126 aa).

Positions 1–28 (MPTINQLVRKGRQSETTKSKSPALQDCP) are disordered. Aspartate 89 carries the 3-methylthioaspartic acid modification. Positions 103-126 (DTQGVKDRKQARSKYGAKRAKAGK) are disordered. A compositionally biased stretch (basic residues) spans 113 to 126 (ARSKYGAKRAKAGK).

The protein belongs to the universal ribosomal protein uS12 family. As to quaternary structure, part of the 30S ribosomal subunit. Contacts proteins S8 and S17. May interact with IF1 in the 30S initiation complex.

In terms of biological role, with S4 and S5 plays an important role in translational accuracy. Functionally, interacts with and stabilizes bases of the 16S rRNA that are involved in tRNA selection in the A site and with the mRNA backbone. Located at the interface of the 30S and 50S subunits, it traverses the body of the 30S subunit contacting proteins on the other side and probably holding the rRNA structure together. The combined cluster of proteins S8, S12 and S17 appears to hold together the shoulder and platform of the 30S subunit. This is Small ribosomal subunit protein uS12 from Paraburkholderia phytofirmans (strain DSM 17436 / LMG 22146 / PsJN) (Burkholderia phytofirmans).